Here is a 361-residue protein sequence, read N- to C-terminus: Molybdopterin synthase catalytic subunit (361 aa).

Residues 101–102 (HR), Lys117, and 124–126 (KKE) each bind substrate.

It belongs to the MoaE family. MOCS2B subfamily. Heterotetramer; composed of 2 small (Mocs2A) and 2 large (Mocs2B) subunits.

The protein localises to the cytoplasm. It catalyses the reaction 2 [molybdopterin-synthase sulfur-carrier protein]-C-terminal-Gly-aminoethanethioate + cyclic pyranopterin phosphate + H2O = molybdopterin + 2 [molybdopterin-synthase sulfur-carrier protein]-C-terminal Gly-Gly + 2 H(+). The protein operates within cofactor biosynthesis; molybdopterin biosynthesis. Functionally, catalytic subunit of the molybdopterin synthase complex, a complex that catalyzes the conversion of precursor Z into molybdopterin. Acts by mediating the incorporation of 2 sulfur atoms from thiocarboxylated Mocs2A into precursor Z to generate a dithiolene group. In Drosophila persimilis (Fruit fly), this protein is Molybdopterin synthase catalytic subunit.